A 191-amino-acid chain; its full sequence is Peptidyl-tRNA hydrolase (191 aa).

A tRNA-binding site is contributed by Tyr-14. His-19 (proton acceptor) is an active-site residue. 3 residues coordinate tRNA: Tyr-64, Asn-66, and Asn-112.

Belongs to the PTH family. In terms of assembly, monomer.

Its subcellular location is the cytoplasm. It catalyses the reaction an N-acyl-L-alpha-aminoacyl-tRNA + H2O = an N-acyl-L-amino acid + a tRNA + H(+). Its function is as follows. Hydrolyzes ribosome-free peptidyl-tRNAs (with 1 or more amino acids incorporated), which drop off the ribosome during protein synthesis, or as a result of ribosome stalling. Functionally, catalyzes the release of premature peptidyl moieties from peptidyl-tRNA molecules trapped in stalled 50S ribosomal subunits, and thus maintains levels of free tRNAs and 50S ribosomes. In Lachnoclostridium phytofermentans (strain ATCC 700394 / DSM 18823 / ISDg) (Clostridium phytofermentans), this protein is Peptidyl-tRNA hydrolase.